A 102-amino-acid polypeptide reads, in one-letter code: Large ribosomal subunit protein bL21 (102 aa).

It belongs to the bacterial ribosomal protein bL21 family. As to quaternary structure, part of the 50S ribosomal subunit. Contacts protein L20.

Its function is as follows. This protein binds to 23S rRNA in the presence of protein L20. In Ehrlichia canis (strain Jake), this protein is Large ribosomal subunit protein bL21.